A 276-amino-acid chain; its full sequence is NADPH-dependent 7-cyano-7-deazaguanine reductase (276 aa).

83 to 85 contributes to the substrate binding site; it reads IES. 85 to 86 lines the NADPH pocket; that stretch reads SK. Cys184 acts as the Thioimide intermediate in catalysis. Residue Asp191 is the Proton donor of the active site. 223 to 224 serves as a coordination point for substrate; the sequence is HE. 252-253 contacts NADPH; sequence RG.

It belongs to the GTP cyclohydrolase I family. QueF type 2 subfamily. Homodimer.

Its subcellular location is the cytoplasm. The enzyme catalyses 7-aminomethyl-7-carbaguanine + 2 NADP(+) = 7-cyano-7-deazaguanine + 2 NADPH + 3 H(+). The protein operates within tRNA modification; tRNA-queuosine biosynthesis. Functionally, catalyzes the NADPH-dependent reduction of 7-cyano-7-deazaguanine (preQ0) to 7-aminomethyl-7-deazaguanine (preQ1). The protein is NADPH-dependent 7-cyano-7-deazaguanine reductase of Desulfotalea psychrophila (strain LSv54 / DSM 12343).